The primary structure comprises 317 residues: MATAGASSFEDEIMESDIELEGEAVEPDNDPPQKMGDPSVEVSDEKRDQAQLCKNKGVDAFSEGKLDEAIEHLTEAIVLNPTSAIAYATRAVIFVKSKKPNAAIRDADAALKINPDSAKGYKSRGMAKAMLGKWEEAAQDLRMAAKLDYDEEIGAELKKVEPNVLKIEEHRKKYERLRKERDIKKAEMEKQRKHAEEVSAASAALKDGDVIAIHSSSELDTKLKAASSLSRLVVLYFTAAWCGPCRFIGPVCKSLAEKHRNVVFLKVDIDELNSVAYRWNVSSVPSFFFVRNGKEIDKVVGADKNGLERKVAQHGSS.

The tract at residues 1-48 (MATAGASSFEDEIMESDIELEGEAVEPDNDPPQKMGDPSVEVSDEKRD) is disordered. Positions 9–29 (FEDEIMESDIELEGEAVEPDN) are enriched in acidic residues. 3 TPR repeats span residues 50–83 (AQLC…NPTS), 85–117 (IAYA…NPDS), and 119–151 (KGYK…DYDE). Positions 189-316 (EKQRKHAEEV…LERKVAQHGS (128 aa)) constitute a Thioredoxin domain. Residues cysteine 242 and cysteine 245 each act as nucleophile in the active site. Cysteine 242 and cysteine 245 are oxidised to a cystine.

The protein belongs to the thioredoxin family.

Functionally, probable thiol-disulfide oxidoreductase that may participate in various redox reactions and act as chaperone under heat shock. May interact with HSP70 proteins through the TPR repeats. The polypeptide is TPR repeat-containing thioredoxin TDX (Oryza sativa subsp. japonica (Rice)).